Consider the following 50-residue polypeptide: Insulin-1 (50 aa).

Disulfide bonds link cysteine 7/cysteine 36, cysteine 19/cysteine 49, and cysteine 35/cysteine 40.

It belongs to the insulin family. In terms of assembly, heterodimer of a B chain and an A chain linked by two disulfide bonds.

It is found in the secreted. Its function is as follows. Insulin decreases blood glucose concentration. It increases cell permeability to monosaccharides, amino acids and fatty acids. It accelerates glycolysis, the pentose phosphate cycle, and glycogen synthesis in liver. This Katsuwonus pelamis (Skipjack tuna) protein is Insulin-1.